We begin with the raw amino-acid sequence, 204 residues long: LexA repressor (204 aa).

A DNA-binding region (H-T-H motif) is located at residues 29–49; sequence VREICKGVGLSSTSSVHGHLS. Residues S126 and K163 each act as for autocatalytic cleavage activity in the active site.

It belongs to the peptidase S24 family. In terms of assembly, homodimer.

It carries out the reaction Hydrolysis of Ala-|-Gly bond in repressor LexA.. Functionally, represses a number of genes involved in the response to DNA damage (SOS response), including recA and lexA. In the presence of single-stranded DNA, RecA interacts with LexA causing an autocatalytic cleavage which disrupts the DNA-binding part of LexA, leading to derepression of the SOS regulon and eventually DNA repair. This is LexA repressor from Clostridium novyi (strain NT).